The primary structure comprises 89 residues: Small ribosomal subunit protein bS16 (89 aa).

This sequence belongs to the bacterial ribosomal protein bS16 family.

The protein is Small ribosomal subunit protein bS16 of Nitrosomonas europaea (strain ATCC 19718 / CIP 103999 / KCTC 2705 / NBRC 14298).